The primary structure comprises 416 residues: Cyclic dinucleotide synthase CdnG (416 aa).

Position 72 (serine 72) interacts with GTP. Residues aspartate 89, aspartate 91, and aspartate 140 contribute to the active site. Aspartate 91 contacts GTP. A Mg(2+)-binding site is contributed by aspartate 91. The segment at 145-167 is disordered; sequence RRRAPKEKEGEIPHAKKGTRSDP. A compositionally biased stretch (basic and acidic residues) spans 150–167; the sequence is KEKEGEIPHAKKGTRSDP. Residues lysine 236, serine 253, glutamate 305, arginine 306, and aspartate 309 each coordinate GTP.

This sequence belongs to the CD-NTase family. G10 subfamily. Requires Mg(2+) as cofactor.

The enzyme catalyses UTP + GTP = 3',3'-cGMP-UMP + 2 diphosphate. It carries out the reaction GTP + ATP = 3',3'-cGAMP + 2 diphosphate. The catalysed reaction is 2 ATP = 3',3'-c-di-AMP + 2 diphosphate. Functionally, cyclic nucleotide synthase (second messenger synthase) of a CBASS antivirus system. CBASS (cyclic oligonucleotide-based antiphage signaling system) provides immunity against bacteriophage. The CD-NTase protein synthesizes cyclic nucleotides in response to infection; these serve as specific second messenger signals. The signals activate a diverse range of effectors, leading to bacterial cell death and thus abortive phage infection. A type II-short CBASS system. Cyclic dinucleotide synthase that catalyzes the synthesis of predominantly 3'3'-cGMP-UMP, followed by 3'3'-cGAMP and c-di-AMP in a reaction mixture of ATP, CTP, GTP and UTP. The cyclic nucleotide products are second messengers that activate the CBASS Cap5 effector nuclease, leading to DNA degradation and probably cell death. Cyclic nucleotides do not activate the effector equally; reactions with ATP/GTP, ATP/UTP and ATP alone activate Cap5, whereas reaction with GTP/UTP (the major in vitro product) do not. This Bradyrhizobium diazoefficiens (strain JCM 10833 / BCRC 13528 / IAM 13628 / NBRC 14792 / USDA 110) protein is Cyclic dinucleotide synthase CdnG.